A 157-amino-acid polypeptide reads, in one-letter code: MAAGDFRLCDVVLDDTIGRSTPDVEHERAVAIFDLIEENRFEPLGHSGGPYRLNISLMDSKLVFAIKTEEGGDVATHILSLTPFRRIVKDYFMICESYYEAIRSATPSRIEAIDMGRRGIHNEGSQTLKDRLAGKIEVDFDTARRLFTLVCVLYWRG.

Belongs to the UPF0262 family.

The protein is UPF0262 protein RHE_CH00582 of Rhizobium etli (strain ATCC 51251 / DSM 11541 / JCM 21823 / NBRC 15573 / CFN 42).